A 148-amino-acid polypeptide reads, in one-letter code: Large ribosomal subunit protein bL9 (148 aa).

This sequence belongs to the bacterial ribosomal protein bL9 family.

Binds to the 23S rRNA. This chain is Large ribosomal subunit protein bL9, found in Desulfitobacterium hafniense (strain DSM 10664 / DCB-2).